The chain runs to 62 residues: uncharacterized protein (62 aa).

A run of 2 helical transmembrane segments spans residues 9–29 and 42–62; these read HNELLEFFHLFVTIQWLALIG and AAVVGFFIRFTFGTPIFLQLL.

The protein localises to the membrane. This is an uncharacterized protein from Saccharomyces cerevisiae (strain ATCC 204508 / S288c) (Baker's yeast).